Consider the following 530-residue polypeptide: Autoinducer-2 kinase (530 aa).

Belongs to the FGGY kinase family.

It localises to the cytoplasm. The catalysed reaction is (S)-4,5-dihydroxypentane-2,3-dione + ATP = (2S)-2-hydroxy-3,4-dioxopentyl phosphate + ADP + H(+). Functionally, catalyzes the phosphorylation of autoinducer-2 (AI-2) to phospho-AI-2, which subsequently inactivates the transcriptional regulator LsrR and leads to the transcription of the lsr operon. Phosphorylates the ring-open form of (S)-4,5-dihydroxypentane-2,3-dione (DPD), which is the precursor to all AI-2 signaling molecules, at the C5 position. The polypeptide is Autoinducer-2 kinase (Salmonella paratyphi B (strain ATCC BAA-1250 / SPB7)).